We begin with the raw amino-acid sequence, 510 residues long: Probable malate:quinone oxidoreductase (510 aa).

Belongs to the MQO family. FAD is required as a cofactor.

The enzyme catalyses (S)-malate + a quinone = a quinol + oxaloacetate. It participates in carbohydrate metabolism; tricarboxylic acid cycle; oxaloacetate from (S)-malate (quinone route): step 1/1. This chain is Probable malate:quinone oxidoreductase, found in Wigglesworthia glossinidia brevipalpis.